The chain runs to 552 residues: Phosphoglucomutase (552 aa).

Ser143 serves as the catalytic Phosphoserine intermediate. Positions 143, 295, 297, and 299 each coordinate Mg(2+).

The protein belongs to the phosphohexose mutase family. Mg(2+) is required as a cofactor.

The enzyme catalyses alpha-D-glucose 1-phosphate = alpha-D-glucose 6-phosphate. Its pathway is glycolipid metabolism; diglucosyl-diacylglycerol biosynthesis. Functionally, catalyzes the interconversion between glucose-6-phosphate and alpha-glucose-1-phosphate. This is the first step in the biosynthesis of diglucosyl-diacylglycerol (Glc2-DAG), i.e. the predominant glycolipid found in the S.aureus membrane, which is also used as a membrane anchor for lipoteichoic acid (LTA). The polypeptide is Phosphoglucomutase (pgcA) (Staphylococcus aureus (strain MRSA252)).